The following is a 61-amino-acid chain: Metallothionein-2A (61 aa).

At Met-1 the chain carries N-acetylmethionine. Residues 1–29 (MDPNCSCAAGGSCTCAGSCKCKDCKCTSC) form a beta region. A divalent metal cation contacts are provided by Cys-5, Cys-7, Cys-13, Cys-15, Cys-19, Cys-21, Cys-24, Cys-26, Cys-29, Cys-33, Cys-34, Cys-36, Cys-37, Cys-41, Cys-44, Cys-48, Cys-50, and Cys-57. Positions 30 to 61 (KKSCCSCCPVGCAKCAQGCICKGASDKCSCCA) are alpha. Ser-58 is modified (phosphoserine). A divalent metal cation-binding residues include Cys-59 and Cys-60.

Belongs to the metallothionein superfamily. Type 1 family. Interacts with EOLA1.

Metallothioneins have a high content of cysteine residues that bind various heavy metals; these proteins are transcriptionally regulated by both heavy metals and glucocorticoids. The sequence is that of Metallothionein-2A (MT2A) from Sus scrofa (Pig).